The primary structure comprises 339 residues: Dihydroorotate dehydrogenase (quinone) (339 aa).

Residues 62–66 (AGMDK) and Thr86 contribute to the FMN site. A substrate-binding site is contributed by Lys66. 111–115 (NRMGF) contacts substrate. FMN-binding residues include Asn139 and Asn172. Asn172 contributes to the substrate binding site. The active-site Nucleophile is Ser175. Asn177 is a binding site for substrate. Residues Lys217 and Thr245 each contribute to the FMN site. 246-247 (NT) lines the substrate pocket. Residues Gly268, Gly297, and 318–319 (YS) each bind FMN.

Belongs to the dihydroorotate dehydrogenase family. Type 2 subfamily. Monomer. It depends on FMN as a cofactor.

The protein resides in the cell membrane. The enzyme catalyses (S)-dihydroorotate + a quinone = orotate + a quinol. It participates in pyrimidine metabolism; UMP biosynthesis via de novo pathway; orotate from (S)-dihydroorotate (quinone route): step 1/1. Functionally, catalyzes the conversion of dihydroorotate to orotate with quinone as electron acceptor. This Shewanella piezotolerans (strain WP3 / JCM 13877) protein is Dihydroorotate dehydrogenase (quinone).